Reading from the N-terminus, the 117-residue chain is Immunoglobulin lambda variable 1-47 (117 aa).

The first 19 residues, 1-19 (MAGFPLLLTLLTHCAGSWA), serve as a signal peptide directing secretion. Gln20 is subject to Pyrrolidone carboxylic acid. The segment at 20-44 (QSVLTQPPSASGTPGQRVTISCSGS) is framework-1. One can recognise an Ig-like domain in the interval 20–117 (QSVLTQPPSA…CAAWDDSLSG (98 aa)). Cys41 and Cys108 form a disulfide bridge. Positions 45 to 52 (SSNIGSNY) are complementarity-determining-1. A framework-2 region spans residues 53 to 69 (VYWYQQLPGTAPKLLIY). Residues 70-72 (SNN) form a complementarity-determining-2 region. Residues 73–108 (QRPSGVPDRFSGSKSGTSASLAISGLRSEDEADYYC) form a framework-3 region. The complementarity-determining-3 stretch occupies residues 109-117 (AAWDDSLSG).

As to quaternary structure, immunoglobulins are composed of two identical heavy chains and two identical light chains; disulfide-linked.

It localises to the secreted. The protein localises to the cell membrane. V region of the variable domain of immunoglobulin light chains that participates in the antigen recognition. Immunoglobulins, also known as antibodies, are membrane-bound or secreted glycoproteins produced by B lymphocytes. In the recognition phase of humoral immunity, the membrane-bound immunoglobulins serve as receptors which, upon binding of a specific antigen, trigger the clonal expansion and differentiation of B lymphocytes into immunoglobulins-secreting plasma cells. Secreted immunoglobulins mediate the effector phase of humoral immunity, which results in the elimination of bound antigens. The antigen binding site is formed by the variable domain of one heavy chain, together with that of its associated light chain. Thus, each immunoglobulin has two antigen binding sites with remarkable affinity for a particular antigen. The variable domains are assembled by a process called V-(D)-J rearrangement and can then be subjected to somatic hypermutations which, after exposure to antigen and selection, allow affinity maturation for a particular antigen. The sequence is that of Immunoglobulin lambda variable 1-47 from Homo sapiens (Human).